The chain runs to 773 residues: Molybdenum cofactor sulfurase (773 aa).

The residue at position 243 (Lys-243) is an N6-(pyridoxal phosphate)lysine. Cys-410 is a catalytic residue. The region spanning 632 to 773 is the MOSC domain; sequence LRLLRQSGQR…LSCGDTVLVE (142 aa). The residue at position 731 (Ser-731) is a Phosphoserine.

It belongs to the class-V pyridoxal-phosphate-dependent aminotransferase family. MOCOS subfamily. Requires pyridoxal 5'-phosphate as cofactor.

It carries out the reaction Mo-molybdopterin + L-cysteine + AH2 = thio-Mo-molybdopterin + L-alanine + A + H2O. The protein operates within cofactor biosynthesis; molybdopterin biosynthesis. In terms of biological role, sulfurates the molybdenum cofactor. Sulfation of molybdenum is essential for xanthine dehydrogenase (XDH) and aldehyde oxidase (ADO) enzymes in which molybdenum cofactor is liganded by 1 oxygen and 1 sulfur atom in active form. The polypeptide is Molybdenum cofactor sulfurase (Drosophila ananassae (Fruit fly)).